The primary structure comprises 1088 residues: Extended synaptotagmin-1 (1088 aa).

Position 1 is an N-acetylmethionine (Met-1). The Cytoplasmic segment spans residues 1–30; that stretch reads MERSPEEGAGPEPSGQSPATDSTRERDGGS. Positions 1 to 38 are disordered; sequence MERSPEEGAGPEPSGQSPATDSTRERDGGSGVPPAGPG. A helical transmembrane segment spans residues 31–51; the sequence is GVPPAGPGAASEALAVLTSFG. Over 52 to 54 the chain is Lumenal; that stretch reads RRL. Residues 55-75 traverse the membrane as a helical segment; that stretch reads LVLVPVYLAGAAGLSVGFVLF. The Cytoplasmic portion of the chain corresponds to 76–1088; it reads GLALYLGWRR…LIDDRDKGGS (1013 aa). Residues 127–305 enclose the SMP-LTD domain; the sequence is DVEKAEWLNK…LPNRLLVPLV (179 aa). C2 domains are found at residues 304–425, 446–572, 618–740, and 771–888; these read LVPD…DNWY, DAEK…QLSS, DAPP…DEWL, and QVNS…ALSG. Position 316 is a phosphoserine; by CDK5 (Ser-316). 8 residues coordinate Ca(2+): Lys-336, Asp-337, Asp-349, Asp-396, Asp-398, Asp-400, Asp-402, and Asp-403. A disordered region spans residues 599–630; it reads TEPGAQDWDSESPETGSSVDAPPRPYHTTPNS. Lys-806 bears the N6-acetyllysine mark. Residue Ser-809 is modified to Phosphoserine. Residues 911 to 930 form a disordered region; sequence HSHSSSSLNEEPEVLGDPTH. Ser-933 and Ser-947 each carry phosphoserine. The region spanning 955–1077 is the C2 5 domain; it reads PLGQVKLTVW…DLSQGAAQWY (123 aa). Phosphotyrosine is present on Tyr-993. The interval 1002-1009 is required for phosphatidylinositol 4,5-bisphosphate-dependent location at the cell membrane; sequence KNRGTKRK.

The protein belongs to the extended synaptotagmin family. In terms of assembly, interacts with ESYT2 and ESYT3. Interacts with ADGRD1; inhibiting the G-protein-coupled receptor activity of ADGRD1. Interaction with ADGRD1 is abolished when cytosolic calcium increases, relieving ADGRD1 G-protein-coupled receptor activity. Interacts (phosphorylated form) with SLC2A4. Phosphorylated on Ser residues in insulin-treated adipocytes (in vitro); this promotes interaction with SLC2A4. Ubiquitously expressed with a higher expression in spleen and white adipose tissue.

It localises to the endoplasmic reticulum membrane. The protein localises to the cell membrane. Functionally, binds calcium (via the C2 domains) and translocates to sites of contact between the endoplasmic reticulum and the cell membrane in response to increased cytosolic calcium levels. Helps tether the endoplasmic reticulum to the cell membrane and promotes the formation of appositions between the endoplasmic reticulum and the cell membrane. Acts as an inhibitor of ADGRD1 G-protein-coupled receptor activity in absence of cytosolic calcium. Binds glycerophospholipids in a barrel-like domain and may play a role in cellular lipid transport. In Rattus norvegicus (Rat), this protein is Extended synaptotagmin-1 (Esyt1).